A 99-amino-acid polypeptide reads, in one-letter code: Malonate decarboxylase acyl carrier protein (99 aa).

At Ser25 the chain carries O-(phosphoribosyl dephospho-coenzyme A)serine.

This sequence belongs to the MdcC family. Covalently binds the prosthetic group of malonate decarboxylase.

It is found in the cytoplasm. In terms of biological role, subunit of malonate decarboxylase, it is an acyl carrier protein to which acetyl and malonyl thioester residues are bound via a 2'-(5''-phosphoribosyl)-3'-dephospho-CoA prosthetic group and turn over during the catalytic mechanism. This Pseudomonas syringae pv. tomato (strain ATCC BAA-871 / DC3000) protein is Malonate decarboxylase acyl carrier protein.